The sequence spans 182 residues: Unknown protein 1 (182 aa).

The chain is Unknown protein 1 from Helianthus annuus (Common sunflower).